A 346-amino-acid chain; its full sequence is Arsenite methyltransferase (346 aa).

Belongs to the methyltransferase superfamily. Arsenite methyltransferase family.

The enzyme catalyses arsenic triglutathione + [thioredoxin]-dithiol + S-adenosyl-L-methionine + 2 H2O = methylarsonous acid + [thioredoxin]-disulfide + 3 glutathione + S-adenosyl-L-homocysteine + H(+). The catalysed reaction is arsenic triglutathione + 2 [thioredoxin]-dithiol + 2 S-adenosyl-L-methionine + H2O = dimethylarsinous acid + 2 [thioredoxin]-disulfide + 3 glutathione + 2 S-adenosyl-L-homocysteine + 2 H(+). It carries out the reaction arsenic triglutathione + 3 [thioredoxin]-dithiol + 3 S-adenosyl-L-methionine = trimethylarsine + 3 [thioredoxin]-disulfide + 3 glutathione + 3 S-adenosyl-L-homocysteine + 3 H(+). Catalyzes the transfer of a methyl group from AdoMet to arsenite, producing methylated arsenicals. Involved in the conversion of As(III) to dimethylarsenate as the main product in the medium and also produces dimethylarsine and trimethylarsine gases. Reduces the arsenic toxicity in the cell and may contribute to the global arsenic cycling. This chain is Arsenite methyltransferase, found in Aquipseudomonas alcaligenes (strain ATCC 14909 / DSM 50342 / CCUG 1425 / JCM 20561 / NBRC 14159 / NCIMB 9945 / NCTC 10367 / 1577) (Pseudomonas alcaligenes).